The chain runs to 644 residues: Keratin, type II cytoskeletal 1 (644 aa).

Residues Ser-2–Arg-179 form a head region. Arg-12 is modified (omega-N-methylarginine). Phosphoserine is present on residues Ser-18 and Ser-21. Over residues Ala-22–Arg-38 the composition is skewed to low complexity. Positions Ala-22–Ser-47 are disordered. Residue Arg-45 is modified to Omega-N-methylarginine. Ser-66 is subject to Phosphoserine. Omega-N-methylarginine is present on Arg-82. Positions Glu-180 to Leu-215 are coil 1A. Positions Glu-180–Met-493 constitute an IF rod domain. Residues Gln-216–Phe-234 form a linker 1 region. The segment at Ile-235–Met-326 is coil 1B. N6,N6-dimethyllysine is present on Lys-276. Positions Gln-327–Ile-350 are linker 12. Phosphoserine is present on Ser-344. The interval Ile-351 to Glu-489 is coil 2. 2 disordered regions span residues Glu-489 to Gly-523 and Ser-568 to Arg-644. The interval Glu-490 to Arg-644 is tail. Over residues Val-501–Thr-511 the composition is skewed to low complexity. Composition is skewed to gly residues over residues Ser-513–Gly-523 and Ser-568–Ser-620. An omega-N-methylarginine mark is found at Arg-518 and Arg-588. The span at Gly-621–Ser-631 shows a compositional bias: low complexity. The segment covering Val-632–Arg-644 has biased composition (polar residues).

The protein belongs to the intermediate filament family. Heterotetramer of two type I and two type II keratins. Heterodimer with KRT10. Two heterodimers of KRT1 and KRT10 form a heterotetramer. Forms a heterodimer with KRT14; the interaction is more abundant in the absence of KRT5. Interacts with PLEC isoform 1C, when in a heterodimer with KRT10. Interacts with ITGB1 in the presence of RACK1 and SRC, and with RACK1. Interacts with C1QBP; the association represents a cell surface kininogen receptor. Interacts with EPPK1; interaction is dependent of higher-order structure of intermediate filament. In terms of processing, undergoes deimination of some arginine residues (citrullination). In terms of tissue distribution, the source of this protein is neonatal foreskin. The 67-kDa type II keratins are expressed in terminally differentiating epidermis.

It is found in the cell membrane. It localises to the cytoplasm. In terms of biological role, may regulate the activity of kinases such as PKC and SRC via binding to integrin beta-1 (ITB1) and the receptor of activated protein C kinase 1 (RACK1). In complex with C1QBP is a high affinity receptor for kininogen-1/HMWK. This is Keratin, type II cytoskeletal 1 (KRT1) from Homo sapiens (Human).